Consider the following 242-residue polypeptide: Coiled-coil domain-containing protein 107 (242 aa).

The first 24 residues, 1 to 24 (MEGAGPVLSILGLLLVSAPFGVLG), serve as a signal peptide directing secretion. A disordered region spans residues 27-62 (PSADLGAHPERGSQVSPGTTEPRRQPPPKDQRERAR). Over residues 47-62 (EPRRQPPPKDQRERAR) the composition is skewed to basic and acidic residues. A helical transmembrane segment spans residues 65–85 (SLSLGALYTAAVVAFVLFKCL). Residues 97–132 (EKNKKKSSQSEQQLVQLTQQLAQTEQHLNHLMTQLD) adopt a coiled-coil conformation. The disordered stretch occupies residues 186–210 (KEDQEAGNSQAWEEPITWSPETRNL).

It localises to the membrane. The protein is Coiled-coil domain-containing protein 107 (Ccdc107) of Mus musculus (Mouse).